The primary structure comprises 2476 residues: Non-reducing polyketide synthase ausA (2476 aa).

Positions 14 to 253 are N-terminal acylcarrier protein transacylase domain (SAT); that stretch reads VLFGPKYPEV…HHSNHTQAVE (240 aa). A Ketosynthase family 3 (KS3) domain is found at 379–795; it reads AVPIAVTGMA…GSNAAIVLRE (417 aa). Active-site for beta-ketoacyl synthase activity residues include C544, H679, and H718. Positions 906–1210 are malonyl-CoA:ACP transacylase (MAT) domain; the sequence is ICFGGQTGDT…LPTDLSGAQA (305 aa). S993 serves as the catalytic For acyl/malonyl transferase activity. The interval 1277-1405 is N-terminal hotdog fold; that stretch reads QEASLVRLLR…GRVSLQAAGS (129 aa). Residues 1277 to 1584 form the PKS/mFAS DH domain; that stretch reads QEASLVRLLR…FTGVSIQSLK (308 aa). The tract at residues 1280–1583 is product template (PT) domain; that stretch reads SLVRLLRQDG…TFTGVSIQSL (304 aa). H1310 (proton acceptor; for dehydratase activity) is an active-site residue. The tract at residues 1433 to 1584 is C-terminal hotdog fold; sequence SSSGLKRSTV…FTGVSIQSLK (152 aa). D1491 serves as the catalytic Proton donor; for dehydratase activity. The region spanning 1626-1700 is the Carrier domain; that stretch reads DGDLLAVQTM…GLVQRIFPGH (75 aa). An O-(pantetheine 4'-phosphoryl)serine modification is found at S1660. The tract at residues 1862-2095 is methyltransferase (CMeT) domain; that stretch reads QHASEHKLLH…GFNWVDWTDN (234 aa). The interval 2128–2476 is thioesterase (TE) domain; the sequence is NTVQEQTVLY…YEFLRRHVGL (349 aa). Catalysis depends on for thioesterase activity residues S2251, D2413, and H2445.

The catalysed reaction is 3 malonyl-CoA + acetyl-CoA + 2 S-adenosyl-L-methionine = 3,5-dimethylorsellinate + 2 S-adenosyl-L-homocysteine + 3 CO2 + 4 CoA. It participates in secondary metabolite biosynthesis; terpenoid biosynthesis. Its function is as follows. Non-reducing polyketide synthase; part of the gene cluster A that mediates the biosynthesis of austinol and dehydroaustinol, two fungal meroterpenoids. The first step of the pathway is the synthesis of 3,5-dimethylorsellinic acid by the polyketide synthase ausA. 3,5-dimethylorsellinic acid is then prenylated by the polyprenyl transferase ausN. Further epoxidation by the FAD-dependent monooxygenase ausM and cyclization by the probable terpene cyclase ausL lead to the formation of protoaustinoid A. Protoaustinoid A is then oxidized to spiro-lactone preaustinoid A3 by the combined action of the FAD-binding monooxygenases ausB and ausC, and the dioxygenase ausE. Acid-catalyzed keto-rearrangement and ring contraction of the tetraketide portion of preaustinoid A3 by ausJ lead to the formation of preaustinoid A4. The aldo-keto reductase ausK, with the help of ausH, is involved in the next step by transforming preaustinoid A4 into isoaustinone which is in turn hydroxylated by the P450 monooxygenase ausI to form austinolide. Finally, the cytochrome P450 monooxygenase ausG modifies austinolide to austinol. Austinol can be further modified to dehydroaustinol which forms a diffusible complex with diorcinol that initiates conidiation. Due to genetic rearrangements of the clusters and the subsequent loss of some enzymes, the end products of the Emericella nidulans austinoid biosynthesis clusters are austinol and dehydroaustinol, even if additional enzymes, such as the O-acetyltransferase ausQ and the cytochrome P450 monooxygenase ausR are still functional. The polypeptide is Non-reducing polyketide synthase ausA (Emericella nidulans (strain FGSC A4 / ATCC 38163 / CBS 112.46 / NRRL 194 / M139) (Aspergillus nidulans)).